The following is an 89-amino-acid chain: Large ribosomal subunit protein bL28 (89 aa).

The protein belongs to the bacterial ribosomal protein bL28 family.

The polypeptide is Large ribosomal subunit protein bL28 (Chlamydia pneumoniae (Chlamydophila pneumoniae)).